We begin with the raw amino-acid sequence, 261 residues long: tRNA pseudouridine synthase A (261 aa).

The Nucleophile role is filled by aspartate 51. Residue tyrosine 109 coordinates substrate.

It belongs to the tRNA pseudouridine synthase TruA family. Homodimer.

The enzyme catalyses uridine(38/39/40) in tRNA = pseudouridine(38/39/40) in tRNA. Functionally, formation of pseudouridine at positions 38, 39 and 40 in the anticodon stem and loop of transfer RNAs. This Shewanella baltica (strain OS185) protein is tRNA pseudouridine synthase A.